Consider the following 165-residue polypeptide: NADPH-dependent 7-cyano-7-deazaguanine reductase (165 aa).

Residues 1-24 (MTTRSTDQTEHLRALGQKTPYPAA) are disordered. The active-site Thioimide intermediate is cysteine 56. Residue aspartate 63 is the Proton donor of the active site. Substrate contacts are provided by residues 78-80 (VES) and 97-98 (ME).

This sequence belongs to the GTP cyclohydrolase I family. QueF type 1 subfamily.

It is found in the cytoplasm. It catalyses the reaction 7-aminomethyl-7-carbaguanine + 2 NADP(+) = 7-cyano-7-deazaguanine + 2 NADPH + 3 H(+). The protein operates within tRNA modification; tRNA-queuosine biosynthesis. Functionally, catalyzes the NADPH-dependent reduction of 7-cyano-7-deazaguanine (preQ0) to 7-aminomethyl-7-deazaguanine (preQ1). In Nitratidesulfovibrio vulgaris (strain ATCC 29579 / DSM 644 / CCUG 34227 / NCIMB 8303 / VKM B-1760 / Hildenborough) (Desulfovibrio vulgaris), this protein is NADPH-dependent 7-cyano-7-deazaguanine reductase.